Reading from the N-terminus, the 119-residue chain is Large ribosomal subunit protein bL20c (119 aa).

The protein belongs to the bacterial ribosomal protein bL20 family.

The protein localises to the plastid. It is found in the chloroplast. Functionally, binds directly to 23S ribosomal RNA and is necessary for the in vitro assembly process of the 50S ribosomal subunit. It is not involved in the protein synthesizing functions of that subunit. This Brachypodium distachyon (Purple false brome) protein is Large ribosomal subunit protein bL20c.